The sequence spans 256 residues: Homeobox-leucine zipper protein HOX28 (256 aa).

A disordered region spans residues 56-86 (ACSPGSPVSSGSGKRGSGSGSGDEVDDAGCD). The span at 58-67 (SPGSPVSSGS) shows a compositional bias: low complexity. The homeobox DNA-binding region spans 91–150 (GARKKLRLSKDQAAVLEECFKTHHTLTPKQKVALAKSLNLRPRQVEVWFQNRRARTKLKQ). The interval 149–193 (KQTEVDCEHLKRWCDQLADDNRRLHKELAELRALKATPTPPAAAP) is leucine-zipper.

The protein belongs to the HD-ZIP homeobox family. Class II subfamily. As to expression, expressed in seedlings, roots, stems and panicles.

The protein resides in the nucleus. Probable transcription factor. The protein is Homeobox-leucine zipper protein HOX28 (HOX28) of Oryza sativa subsp. indica (Rice).